We begin with the raw amino-acid sequence, 340 residues long: Protein-arginine kinase (340 aa).

In terms of domain architecture, Phosphagen kinase C-terminal spans 21-242; that stretch reads VVLSSRIRLA…EQIIMQERVA (222 aa). ATP-binding positions include 24 to 28, H79, R113, 164 to 168, and 195 to 200; these read SSRIR, RASVM, and RGIYGE.

This sequence belongs to the ATP:guanido phosphotransferase family.

It carries out the reaction L-arginyl-[protein] + ATP = N(omega)-phospho-L-arginyl-[protein] + ADP + H(+). Functionally, catalyzes the specific phosphorylation of arginine residues in proteins. The chain is Protein-arginine kinase from Listeria welshimeri serovar 6b (strain ATCC 35897 / DSM 20650 / CCUG 15529 / CIP 8149 / NCTC 11857 / SLCC 5334 / V8).